Consider the following 136-residue polypeptide: 5-hydroxyisourate hydrolase (136 aa).

Residues 1 to 20 (MKRYILATAIASLVAAPAMA) form the signal peptide. 3 residues coordinate substrate: H31, R69, and Y133.

It belongs to the transthyretin family. 5-hydroxyisourate hydrolase subfamily. As to quaternary structure, homotetramer.

The protein localises to the periplasm. The enzyme catalyses 5-hydroxyisourate + H2O = 5-hydroxy-2-oxo-4-ureido-2,5-dihydro-1H-imidazole-5-carboxylate + H(+). In terms of biological role, catalyzes the hydrolysis of 5-hydroxyisourate (HIU) to 2-oxo-4-hydroxy-4-carboxy-5-ureidoimidazoline (OHCU). In Salmonella typhi, this protein is 5-hydroxyisourate hydrolase (hiuH).